Here is a 328-residue protein sequence, read N- to C-terminus: Sin3 histone deacetylase corepressor complex component SDS3 (328 aa).

Residues 1 to 16 (MSAAGLLAPAPAQAGA) are compositionally biased toward low complexity. The tract at residues 1-65 (MSAAGLLAPA…DLAKHDEEDY (65 aa)) is disordered. An N-acetylserine modification is found at serine 2. The segment at 2–170 (SAAGLLAPAP…IENEKLTMEL (169 aa)) is mediates interaction with USP17L2. 2 stretches are compositionally biased toward acidic residues: residues 23–37 (YPEE…EEDE) and 45–54 (SDEDTEDASE). 2 positions are modified to phosphoserine: serine 32 and serine 45. Threonine 49 is subject to Phosphothreonine. Serine 53 is modified (phosphoserine). Basic and acidic residues predominate over residues 56-65 (DLAKHDEEDY). A coiled-coil region spans residues 66–171 (VEMKEQMYQD…ENEKLTMELT (106 aa)). Residues lysine 69, lysine 178, and lysine 201 each participate in a glycyl lysine isopeptide (Lys-Gly) (interchain with G-Cter in SUMO2) cross-link. Residues 188-226 (RPNDPVPIPDKRRKPAPAQLNYLLTDEQIMEDLRTLNKL) are sin3 interaction domain (SID). The tract at residues 226–252 (LKSPKRPASPSSPEHLPATPAESPAQR) is disordered. Phosphoserine occurs at positions 228, 234, and 237. The residue at position 244 (threonine 244) is a Phosphothreonine.

Belongs to the SDS3 family. As to quaternary structure, interacts with HCFC1. Homodimer. Component of the SIN3 histone deacetylase (HDAC) corepressor complex. Interacts with SIN3A. Interaction with SIN3B enhances the interaction between SIN3B and HDAC1 to form a complex. Component of a mSin3A corepressor complex that contains SIN3A, SAP130, SUDS3/SAP45, ARID4B/SAP180, HDAC1 and HDAC2. Interacts with USP17L2; the interaction is direct. Interacts with FOXK2. In terms of processing, polyubiquitinated. 'Lys-63'-polyubiquitinated SUDS3 positively regulates histone deacetylation. Regulated through deubiquitination by USP17L2/USP17 that cleaves 'Lys-63'-linked ubiquitin chains.

The protein resides in the nucleus. Regulatory protein which represses transcription and augments histone deacetylase activity of HDAC1. May have a potential role in tumor suppressor pathways through regulation of apoptosis. May function in the assembly and/or enzymatic activity of the mSin3A corepressor complex or in mediating interactions between the complex and other regulatory complexes. This chain is Sin3 histone deacetylase corepressor complex component SDS3 (SUDS3), found in Pongo abelii (Sumatran orangutan).